The chain runs to 299 residues: DNA-binding transcriptional activator HetR (299 aa).

The interval 1 to 98 (MSNDIDLIKR…GKLLKTLGSQ (98 aa)) is DNA-binding domain. Residues 34-40 (RHGAFLD) and 60-76 (NLRMTGHLHHLEPKRVK) contribute to the DNA site. A flap domain region spans residues 99-216 (EPRYLIQFPY…FYALTRPFYA (118 aa)). Ser152 is a catalytic residue. 179–181 (SEA) is a binding site for DNA. The hood domain stretch occupies residues 217–299 (PADDQERTYI…LQMVFGRKED (83 aa)).

The protein belongs to the peptidase S48 family. As to quaternary structure, upon expression in E.coli most protein is monomeric, although varying amounts of homodimer can be seen. Homodimer; disulfide-linked. Homodimer. Binds the 6 residue C-terminal peptide of PatS; one peptide binds to each subunit. In bacterial two-hybrid assays interacts robustly with itself, Alr2902 and Alr3234 and more weakly with Als1930. In terms of processing, probably autodegrades.

With respect to regulation, protease activity is inhibited by PMSF, suggesting this is a serine protease. In terms of biological role, controls heterocyst differentiation. Dimerization is required for DNA-binding. Has both a protease and a DNA-binding activity. Its function is as follows. Controls heterocyst differentiation; increased expression leads to more heterocysts than usual. Has protease activity. Binds the promoter regions of hetR, hepA and patS and is required for their expression. Dimerization is required for DNA-binding, DNA-binding is inhibited by the PatS6 peptide. Binds the inverted repeat 5'-GTAGGCGAGGGGTCTAACCCCTCATTACC-3' found in the hetP promoter, required for expression of hetP. The chain is DNA-binding transcriptional activator HetR from Nostoc sp. (strain PCC 7120 / SAG 25.82 / UTEX 2576).